The primary structure comprises 208 residues: Putative 3-methyladenine DNA glycosylase (208 aa).

The protein belongs to the DNA glycosylase MPG family.

In Lactobacillus delbrueckii subsp. bulgaricus (strain ATCC 11842 / DSM 20081 / BCRC 10696 / JCM 1002 / NBRC 13953 / NCIMB 11778 / NCTC 12712 / WDCM 00102 / Lb 14), this protein is Putative 3-methyladenine DNA glycosylase.